A 495-amino-acid chain; its full sequence is Protein nucleotidyltransferase YdiU (495 aa).

Gly-92, Gly-94, Arg-95, Lys-114, Asp-126, Gly-127, Arg-177, and Arg-184 together coordinate ATP. Asp-261 acts as the Proton acceptor in catalysis. Asn-262 and Asp-271 together coordinate Mg(2+). Asp-271 is an ATP binding site.

Belongs to the SELO family. Requires Mg(2+) as cofactor. The cofactor is Mn(2+).

The catalysed reaction is L-seryl-[protein] + ATP = 3-O-(5'-adenylyl)-L-seryl-[protein] + diphosphate. It catalyses the reaction L-threonyl-[protein] + ATP = 3-O-(5'-adenylyl)-L-threonyl-[protein] + diphosphate. It carries out the reaction L-tyrosyl-[protein] + ATP = O-(5'-adenylyl)-L-tyrosyl-[protein] + diphosphate. The enzyme catalyses L-histidyl-[protein] + UTP = N(tele)-(5'-uridylyl)-L-histidyl-[protein] + diphosphate. The catalysed reaction is L-seryl-[protein] + UTP = O-(5'-uridylyl)-L-seryl-[protein] + diphosphate. It catalyses the reaction L-tyrosyl-[protein] + UTP = O-(5'-uridylyl)-L-tyrosyl-[protein] + diphosphate. Nucleotidyltransferase involved in the post-translational modification of proteins. It can catalyze the addition of adenosine monophosphate (AMP) or uridine monophosphate (UMP) to a protein, resulting in modifications known as AMPylation and UMPylation. The chain is Protein nucleotidyltransferase YdiU from Bordetella bronchiseptica (strain ATCC BAA-588 / NCTC 13252 / RB50) (Alcaligenes bronchisepticus).